The following is a 629-amino-acid chain: tRNA uridine 5-carboxymethylaminomethyl modification enzyme MnmG (629 aa).

13–18 (GGGHAG) serves as a coordination point for FAD. Residue 273–287 (GPRYCPSIEDKITRF) participates in NAD(+) binding.

This sequence belongs to the MnmG family. In terms of assembly, homodimer. Heterotetramer of two MnmE and two MnmG subunits. FAD is required as a cofactor.

Its subcellular location is the cytoplasm. Its function is as follows. NAD-binding protein involved in the addition of a carboxymethylaminomethyl (cmnm) group at the wobble position (U34) of certain tRNAs, forming tRNA-cmnm(5)s(2)U34. The polypeptide is tRNA uridine 5-carboxymethylaminomethyl modification enzyme MnmG (Colwellia psychrerythraea (strain 34H / ATCC BAA-681) (Vibrio psychroerythus)).